The following is a 447-amino-acid chain: Cytochrome c biogenesis protein CcsB (447 aa).

3 helical membrane passes run 28 to 48, 87 to 107, and 173 to 193; these read LRLA…GTVI, TWWY…CTFR, and IGPI…IWGA.

The protein belongs to the Ccs1/CcsB family. May interact with CcsA.

The protein resides in the cellular thylakoid membrane. Functionally, required during biogenesis of c-type cytochromes (cytochrome c6 and cytochrome f) at the step of heme attachment. This chain is Cytochrome c biogenesis protein CcsB, found in Microcystis aeruginosa (strain NIES-843 / IAM M-2473).